The chain runs to 153 residues: UPF0260 protein YcgN (153 aa).

This sequence belongs to the UPF0260 family.

In Salmonella dublin (strain CT_02021853), this protein is UPF0260 protein YcgN.